Reading from the N-terminus, the 196-residue chain is Early light-induced protein, chloroplastic (196 aa).

The N-terminal 48 residues, 1-48 (MAVSSCQSIMSNSMTNISSRSRVNQFTNIPSVYIPTLRRNVSLKVRSM), are a transit peptide targeting the chloroplast. Residues 47 to 57 (SMAEGEPKEQS) are compositionally biased toward basic and acidic residues. Residues 47–81 (SMAEGEPKEQSKVAVDPTTPTASTPTPQPAYTRPP) are disordered. 3 consecutive transmembrane segments (helical) span residues 105–125 (LAMI…QGLS), 132–152 (GVAW…IPFF), and 176–196 (IAML…TSLV).

Belongs to the ELIP/psbS family.

It is found in the plastid. The protein localises to the chloroplast membrane. Probably involved in the integration of pigments into the mature pigment-protein complexes. In Pisum sativum (Garden pea), this protein is Early light-induced protein, chloroplastic.